Consider the following 304-residue polypeptide: Protein PagO (304 aa).

A run of 10 helical transmembrane segments spans residues 4–24, 34–54, 67–87, 95–115, 119–139, 150–170, 180–200, 214–234, 246–266, and 267–287; these read VSIS…WLAM, VFAT…IAWL, LFQF…MIYG, LAAI…VLFL, AKLM…GILL, WQGI…YTQC, ITFN…TGWF, ILAT…CYFA, LVFL…YGYA, and ISTH…LTLV. 2 EamA domains span residues 15-139 and 161-287; these read LTWG…GILL and LIHA…LTLV.

It belongs to the EamA transporter family.

It localises to the cell membrane. This is Protein PagO (pagO) from Salmonella typhimurium (strain LT2 / SGSC1412 / ATCC 700720).